We begin with the raw amino-acid sequence, 424 residues long: CinA-like protein (424 aa).

Belongs to the CinA family.

This Shewanella putrefaciens (strain CN-32 / ATCC BAA-453) protein is CinA-like protein.